The following is a 203-amino-acid chain: Ras-like protein 1 (203 aa).

17–24 lines the GTP pocket; sequence GGGGVGKS. The short motif at 39 to 47 is the Effector region element; the sequence is YDPTIEDSY. GTP contacts are provided by residues 64–68 and 123–126; these read DTAGQ and NKCD. Cysteine 200 carries the cysteine methyl ester modification. Cysteine 200 is lipidated: S-farnesyl cysteine. A propeptide spans 201–203 (removed in mature form); it reads ILM.

Belongs to the small GTPase superfamily. Ras family.

It is found in the cell membrane. The enzyme catalyses GTP + H2O = GDP + phosphate + H(+). Alternates between an inactive form bound to GDP and an active form bound to GTP. Activated by a guanine nucleotide-exchange factor (GEF) and inactivated by a GTPase-activating protein (GAP). The polypeptide is Ras-like protein 1 (RAS1) (Mucor circinelloides f. lusitanicus (Mucor racemosus var. lusitanicus)).